The chain runs to 1532 residues: MGHSKQIRILLLNEMEKLEKTLFRLEQGYELQFRLGPTLQGKAVTVYTNYPFPGETFNREKFRSLDWENPTEREDDSDKYCKLNLQQSGSFQYYFLQGNEKSGGGYIVVDPILRVGADNHVLPLDCVTLQTFLAKCLGPFDEWESRLRVAKESGYNMIHFTPLQTLGLSRSCYSLANQLELNPDFSRPNRKYTWNDVGQLVEKLKKEWNVICITDVVYNHTAANSKWIQEHPECAYNLVNSPHLKPAWVLDRALWRFSCDVAEGKYKEKGIPALIENDHHMNSIRKIIWEDIFPKLKLWEFFQVDVNKAVEQFRRLLTQENRRVTKSDPNQHLTIIQDPEYRRFGCTVDMNIALTTFIPHDKGPAAIEECCNWFHKRMEELNSEKHRLINYHQEQAVNCLLGNVFYERLAGHGPKLGPVTRKHPLVTRYFTFPFEEIDFSMEESMIHLPNKACFLMAHNGWVMGDDPLRNFAEPGSEVYLRRELICWGDSVKLRYGNKPEDCPYLWAHMKKYTEITATYFQGVRLDNCHSTPLHVAEYMLDAARNLQPNLYVVAELFTGSEDLDNVFVTRLGISSLIREAMSAYNSHEEGRLVYRYGGEPVGSFVQPCLRPLMPAIAHALFMDITHDNECPIVHRSAYDALPSTTIVSMACCASGSTRGYDELVPHQISVVSEERFYTKWNPEALPSNTGEVNFQSGIIAARCAISKLHQELGAKGFIQVYVDQVDEDIVAVTRHSPSIHQSVVAVSRTAFRNPKTSFYSKEVPQMCIPGKIEEVVLEARTIERNTKPYRKDENSINGTPDITVEIREHIQLNESKIVKQAGVATKGPNEYIQEIEFENLSPGSVIIFRVSLDPHAQVAVGILRNHLTQFSPHFKSGSLAVDNADPILKIPFASLASRLTLAELNQILYRCESEEKEDGGGCYDIPNWSALKYAGLQGLMSVLAEIRPKNDLGHPFCNNLRSGDWMIDYVSNRLISRSGTIAEVGKWLQAMFFYLKQIPRYLIPCYFDAILIGAYTTLLDTAWKQMSSFVQNGSTFVKHLSLGSVQLCGVGKFPSLPILSPALMDVPYRLNEITKEKEQCCVSLAAGLPHFSSGIFRCWGRDTFIALRGILLITGRYVEARNIILAFAGTLRHGLIPNLLGEGIYARYNCRDAVWWWLQCIQDYCKMVPNGLDILKCPVSRMYPTDDSAPLPAGTLDQPLFEVIQEAMQKHMQGIQFRERNAGPQIDRNMKDEGFNITAGVDEETGFVYGGNRFNCGTWMDKMGESDRARNRGIPATPRDGSAVEIVGLSKSAVRWLLELSKKNIFPYHEVTVKRHGKAIKVSYDEWNRKIQDNFEKLFHVSEDPSDLNEKHPNLVHKRGIYKDSYGASSPWCDYQLRPNFTIAMVVAPELFTTEKAWKALEIAEKKLLGPLGMKTLDPDDMVYCGIYDNALDNDNYNLAKGFNYHQGPEWLWPIGYFLRAKLYFSRLMGPETTAKTIVLVKNVLSRHYVHLERSPWKGLPELTNENAQYCPFSCETQAWSIATILETLYDL.

At S64 the chain carries Phosphoserine. Catalysis depends on residues D526, H529, and D627.

Belongs to the glycogen debranching enzyme family. As to quaternary structure, monomer. Interacts with NHLRC1/malin. The N-terminus is blocked. Post-translationally, ubiquitinated. As to expression, liver, kidney and lymphoblastoid cells express predominantly isoform 1; whereas muscle and heart express not only isoform 1, but also muscle-specific isoform mRNAs (isoforms 2, 3 and 4). Isoforms 5 and 6 are present in both liver and muscle.

Its subcellular location is the cytoplasm. The enzyme catalyses Transfers a segment of a (1-&gt;4)-alpha-D-glucan to a new position in an acceptor, which may be glucose or a (1-&gt;4)-alpha-D-glucan.. It carries out the reaction Hydrolysis of (1-&gt;6)-alpha-D-glucosidic branch linkages in glycogen phosphorylase limit dextrin.. Multifunctional enzyme acting as 1,4-alpha-D-glucan:1,4-alpha-D-glucan 4-alpha-D-glycosyltransferase and amylo-1,6-glucosidase in glycogen degradation. The polypeptide is Glycogen debranching enzyme (AGL) (Homo sapiens (Human)).